The chain runs to 110 residues: Parvalbumin alpha (110 aa).

The residue at position 2 (serine 2) is an N-acetylserine. 2 positions are modified to phosphoserine: serine 2 and serine 24. EF-hand domains are found at residues 39–74 (KSAD…FSPD) and 78–110 (LSAK…VAES). Aspartate 52, aspartate 54, serine 56, phenylalanine 58, glutamate 60, glutamate 63, aspartate 91, aspartate 93, aspartate 95, lysine 97, and glutamate 102 together coordinate Ca(2+).

Its function is as follows. In muscle, parvalbumin is thought to be involved in relaxation after contraction. It binds two calcium ions. The protein is Parvalbumin alpha (PVALB) of Homo sapiens (Human).